Here is a 216-residue protein sequence, read N- to C-terminus: Nucleoside triphosphate pyrophosphatase (216 aa).

Residue aspartate 86 is the Proton acceptor of the active site.

The protein belongs to the Maf family. It depends on a divalent metal cation as a cofactor.

The protein resides in the cytoplasm. The catalysed reaction is a ribonucleoside 5'-triphosphate + H2O = a ribonucleoside 5'-phosphate + diphosphate + H(+). The enzyme catalyses a 2'-deoxyribonucleoside 5'-triphosphate + H2O = a 2'-deoxyribonucleoside 5'-phosphate + diphosphate + H(+). In terms of biological role, nucleoside triphosphate pyrophosphatase. May have a dual role in cell division arrest and in preventing the incorporation of modified nucleotides into cellular nucleic acids. This chain is Nucleoside triphosphate pyrophosphatase, found in Dictyostelium discoideum (Social amoeba).